Reading from the N-terminus, the 379-residue chain is Endonuclease III homolog 1, chloroplastic (379 aa).

The N-terminal 54 residues, 1-54 (MILLVNGGAATSIHPNAARFYRIGTMSRQIHGAVSSSKHISLKTQHPLSDSNSE), are a transit peptide targeting the chloroplast. The HhH domain occupies 244–272 (KYDGDIPSSLDDLLSLPGIGPKMAHLILH). Lysine 265 (nucleophile; for N-glycosylase activity) is an active-site residue. Residues cysteine 340, cysteine 347, cysteine 350, and cysteine 356 each contribute to the [4Fe-4S] cluster site.

The protein belongs to the Nth/MutY family. [4Fe-4S] cluster serves as cofactor. Expressed at low levels in roots, stems, leaves and flowers.

It localises to the plastid. The protein resides in the chloroplast stroma. It is found in the chloroplast nucleoid. The catalysed reaction is 2'-deoxyribonucleotide-(2'-deoxyribose 5'-phosphate)-2'-deoxyribonucleotide-DNA = a 3'-end 2'-deoxyribonucleotide-(2,3-dehydro-2,3-deoxyribose 5'-phosphate)-DNA + a 5'-end 5'-phospho-2'-deoxyribonucleoside-DNA + H(+). In terms of biological role, bifunctional DNA N-glycosylase with associated apurinic/apyrimidinic (AP) lyase function that catalyzes the first step in base excision repair (BER), the primary repair pathway for the repair of oxidative DNA damage. The DNA N-glycosylase activity releases the damaged DNA base from DNA by cleaving the N-glycosidic bond, leaving an AP site. The AP lyase activity cleaves the phosphodiester bond 3' to the AP site by a beta-elimination. Primarily recognizes and repairs oxidative base damage of pyrimidines. The sequence is that of Endonuclease III homolog 1, chloroplastic from Arabidopsis thaliana (Mouse-ear cress).